A 405-amino-acid polypeptide reads, in one-letter code: Opine dehydrogenase (405 aa).

The protein belongs to the lysopine/nopaline/octopine/opine/vitopine dehydrogenases family.

This Haliotis discus hannai (Japanese abalone) protein is Opine dehydrogenase.